The sequence spans 25 residues: Caerin-2.3 (25 aa).

In terms of tissue distribution, expressed by the skin parotoid and/or rostral glands.

It is found in the secreted. Functionally, acts as a male sex pheromone that attracts females. Has no antimicrobial activity. The sequence is that of Caerin-2.3 from Ranoidea caerulea (Green tree frog).